The chain runs to 81 residues: Cortexin-2 (81 aa).

A helical membrane pass occupies residues 29 to 49 (TAFAFVGMLLVFLGLLIVRCF).

The protein belongs to the cortexin family.

It is found in the membrane. In Danio rerio (Zebrafish), this protein is Cortexin-2 (ctxn2).